The sequence spans 179 residues: Stress response regulator gls24 homolog (179 aa).

The segment at 147–179 is disordered; the sequence is TSEFTSHQVENVKASVDNGVEKLQDQKAEPRVK. The span at 165 to 179 shows a compositional bias: basic and acidic residues; the sequence is GVEKLQDQKAEPRVK.

Belongs to the asp23 family.

The polypeptide is Stress response regulator gls24 homolog (Streptococcus pyogenes serotype M28 (strain MGAS6180)).